The following is an 874-amino-acid chain: Ribosome biogenesis protein ERB1 (874 aa).

The disordered stretch occupies residues 1–148 (MAKKEVSASK…DAFAAADAAT (148 aa)). The span at 27–41 (QAVEKEEAEKEKEEG) shows a compositional bias: basic and acidic residues. The segment covering 55-77 (PESDSDDEGAAAAEEEEEEEEQQ) has biased composition (acidic residues). The segment covering 78 to 89 (QDVKELDLDKGE) has biased composition (basic and acidic residues). 2 stretches are compositionally biased toward acidic residues: residues 95-104 (SDAEDFDSEE) and 128-139 (PKEDGDEQDEQD). Residues 312–429 (RFVPSKHEAK…LRLVPGYQDS (118 aa)) are required for interaction with NOP7. The required for interaction with YTM1 stretch occupies residues 429–465 (SVRERFERSLDLYLAPRLRKNKLNIDPESLIPELPSP). WD repeat units follow at residues 481–520 (GHTG…QVFK) and 529–569 (NGED…FEIE). The segment covering 593–602 (KVKGEDTKGD) has biased composition (basic and acidic residues). Residues 593–640 (KVKGEDTKGDLDDDEEEEEEEEDDDDDEGQGKVKAHNSTAPAKKDVAK) are disordered. A compositionally biased stretch (acidic residues) spans 603–620 (LDDDEEEEEEEEDDDDDE). WD repeat units lie at residues 658–700 (QCRR…SQSP), 703–741 (KSKG…LLKK), 744–783 (PGVR…TPYK), 787–827 (YHEK…DLMT), and 843–874 (INQI…LWTT).

The protein belongs to the WD repeat BOP1/ERB1 family. As to quaternary structure, component of the NOP7 complex, composed of ERB1, NOP7 and YTM1. The complex is held together by ERB1, which interacts with NOP7 via its N-terminal domain and with YTM1 via a high-affinity interaction between the seven-bladed beta-propeller domains of the 2 proteins. The NOP7 complex associates with the 66S pre-ribosome.

It is found in the nucleus. The protein resides in the nucleolus. Its subcellular location is the nucleoplasm. Its function is as follows. Component of the NOP7 complex, which is required for maturation of the 25S and 5.8S ribosomal RNAs and formation of the 60S ribosome. This chain is Ribosome biogenesis protein ERB1, found in Lodderomyces elongisporus (strain ATCC 11503 / CBS 2605 / JCM 1781 / NBRC 1676 / NRRL YB-4239) (Yeast).